We begin with the raw amino-acid sequence, 284 residues long: Bifunctional protein FolD (284 aa).

Residues 165–167, Ser190, and Val231 contribute to the NADP(+) site; that span reads GRS.

Belongs to the tetrahydrofolate dehydrogenase/cyclohydrolase family. Homodimer.

The enzyme catalyses (6R)-5,10-methylene-5,6,7,8-tetrahydrofolate + NADP(+) = (6R)-5,10-methenyltetrahydrofolate + NADPH. The catalysed reaction is (6R)-5,10-methenyltetrahydrofolate + H2O = (6R)-10-formyltetrahydrofolate + H(+). It functions in the pathway one-carbon metabolism; tetrahydrofolate interconversion. Catalyzes the oxidation of 5,10-methylenetetrahydrofolate to 5,10-methenyltetrahydrofolate and then the hydrolysis of 5,10-methenyltetrahydrofolate to 10-formyltetrahydrofolate. The chain is Bifunctional protein FolD from Brevibacillus brevis (strain 47 / JCM 6285 / NBRC 100599).